The chain runs to 745 residues: AMP deaminase 1 (745 aa).

Position 79 is a phosphothreonine (T79). S83 carries the phosphoserine modification. Y214 carries the post-translational modification Phosphotyrosine. Residues H301 and H303 each contribute to the Zn(2+) site. Residues H303 and 372–377 (KFNDKY) contribute to the substrate site. At S439 the chain carries Phosphoserine. Zn(2+) is bound at residue H570. E573 serves as a coordination point for substrate. The Proton acceptor role is filled by H592. D647 is a Zn(2+) binding site. Substrate is bound at residue 648–651 (DPMQ).

It belongs to the metallo-dependent hydrolases superfamily. Adenosine and AMP deaminases family. As to quaternary structure, homotetramer. It depends on Zn(2+) as a cofactor.

The enzyme catalyses AMP + H2O + H(+) = IMP + NH4(+). It participates in purine metabolism; IMP biosynthesis via salvage pathway; IMP from AMP: step 1/1. Its function is as follows. AMP deaminase plays a critical role in energy metabolism. This is AMP deaminase 1 from Mus musculus (Mouse).